Consider the following 412-residue polypeptide: Argininosuccinate synthase (412 aa).

Residues 10-18 (AYSGGLDTS) and A36 contribute to the ATP site. L-citrulline is bound by residues Y87 and S92. Y87 bears the Phosphotyrosine mark. K112 carries the post-translational modification N6-acetyllysine. A Phosphotyrosine modification is found at Y113. Residue 115-123 (SHGATGKGN) participates in ATP binding. Positions 119, 123, and 124 each coordinate L-aspartate. An L-citrulline-binding site is contributed by N123. Residue R127 participates in L-citrulline binding. An N6-acetyllysine; by CLOCK mark is found at K165 and K176. Residues S177 and S180 each carry the phosphoserine modification. Residues S180 and S189 each contribute to the L-citrulline site. T219 carries the post-translational modification Phosphothreonine. L-citrulline contacts are provided by E270 and Y282.

Belongs to the argininosuccinate synthase family. Type 1 subfamily. As to quaternary structure, homotetramer. Interacts with NMRAL1. Interacts with CLOCK; in a circadian manner. Forms tissue-specific complexes with ASL, SLC7A1, HSP90AA1 and nitric oxide synthase NOS1, NOS2 or NOS3; the complex regulates cell-autonomous L-arginine synthesis and citrulline recycling while channeling extracellular L-arginine to nitric oxide synthesis pathway. Post-translationally, acetylated by CLOCK in a circadian manner which negatively regulates its enzyme activity. Deacetylated by histone deacetylases.

It is found in the cytoplasm. Its subcellular location is the cytosol. It catalyses the reaction L-citrulline + L-aspartate + ATP = 2-(N(omega)-L-arginino)succinate + AMP + diphosphate + H(+). It functions in the pathway amino-acid biosynthesis; L-arginine biosynthesis; L-arginine from L-ornithine and carbamoyl phosphate: step 2/3. Its pathway is nitrogen metabolism; urea cycle; (N(omega)-L-arginino)succinate from L-aspartate and L-citrulline: step 1/1. One of the enzymes of the urea cycle, the metabolic pathway transforming neurotoxic amonia produced by protein catabolism into inocuous urea in the liver of ureotelic animals. Catalyzes the formation of arginosuccinate from aspartate, citrulline and ATP and together with ASL it is responsible for the biosynthesis of arginine in most body tissues. Indirectly, may be involved in the control of blood pressure. The sequence is that of Argininosuccinate synthase from Rattus norvegicus (Rat).